The sequence spans 409 residues: Carbamoyl phosphate synthase arginine-specific small chain (409 aa).

A Glutamine amidotransferase type-1 domain is found at 197–389 (NVALIDCGVK…FDNMSQYRAL (193 aa)). Residue Cys-277 is the Nucleophile of the active site. Residues His-362 and Glu-364 contribute to the active site.

This sequence belongs to the CarA family. In terms of assembly, heterodimer composed of 2 chains; the small (or glutamine) chain promotes the hydrolysis of glutamine to ammonia, which is used by the large (or ammonia) chain to synthesize carbamoyl phosphate.

It localises to the cytoplasm. The catalysed reaction is hydrogencarbonate + L-glutamine + 2 ATP + H2O = carbamoyl phosphate + L-glutamate + 2 ADP + phosphate + 2 H(+). The enzyme catalyses L-glutamine + H2O = L-glutamate + NH4(+). It functions in the pathway amino-acid biosynthesis; L-arginine biosynthesis; carbamoyl phosphate from bicarbonate: step 1/1. Small subunit of the arginine-specific carbamoyl phosphate synthase (CPSase). CPSase catalyzes the formation of carbamoyl phosphate from the ammonia moiety of glutamine, carbonate, and phosphate donated by ATP, constituting the first step of 2 biosynthetic pathways, one leading to arginine and/or urea and the other to pyrimidine nucleotides. The small subunit (glutamine amidotransferase) binds and cleaves glutamine to supply the large subunit with the substrate ammonia. This Kluyveromyces lactis (strain ATCC 8585 / CBS 2359 / DSM 70799 / NBRC 1267 / NRRL Y-1140 / WM37) (Yeast) protein is Carbamoyl phosphate synthase arginine-specific small chain (CPA1).